The sequence spans 953 residues: Catenin alpha-2 (953 aa).

Threonine 632 carries the post-translational modification Phosphothreonine. A phosphoserine mark is found at serine 640, serine 651, and serine 901. The span at 912-927 shows a compositional bias: basic and acidic residues; it reads EKKPLVKREKPEEFQT. The interval 912–939 is disordered; it reads EKKPLVKREKPEEFQTRVRRGSQKKHIS. Over residues 928-938 the composition is skewed to basic residues; that stretch reads RVRRGSQKKHI. Phosphoserine is present on serine 939.

It belongs to the vinculin/alpha-catenin family. In terms of assembly, interacts with CDH1 and CDH2. Interacts with ZNF639; recruits CTNNA2 to the nucleus. Interacts with F-actin. As to expression, expressed in neural tissues, with strongest expression in fetal and adult brain. Expressed in the developing cortical plate and marginal zone of 20-week-old human fetal brain.

The protein localises to the cell membrane. It is found in the cytoplasm. It localises to the cytoskeleton. Its subcellular location is the cell junction. The protein resides in the adherens junction. The protein localises to the cell projection. It is found in the axon. It localises to the nucleus. Its function is as follows. May function as a linker between cadherin adhesion receptors and the cytoskeleton to regulate cell-cell adhesion and differentiation in the nervous system. Required for proper regulation of cortical neuronal migration and neurite growth. It acts as a negative regulator of Arp2/3 complex activity and Arp2/3-mediated actin polymerization. It thereby suppresses excessive actin branching which would impair neurite growth and stability. Regulates morphological plasticity of synapses and cerebellar and hippocampal lamination during development. Functions in the control of startle modulation. This is Catenin alpha-2 (CTNNA2) from Homo sapiens (Human).